The sequence spans 388 residues: Succinate--CoA ligase [ADP-forming] subunit beta (388 aa).

In terms of domain architecture, ATP-grasp spans 9 to 244 (KQLFAEFGLP…PSQEDEREAH (236 aa)). Residues Lys46, 53–55 (GRG), Glu99, Ser102, and Glu107 contribute to the ATP site. 2 residues coordinate Mg(2+): Asn199 and Asp213. Substrate-binding positions include Asn264 and 321–323 (GIV).

This sequence belongs to the succinate/malate CoA ligase beta subunit family. In terms of assembly, heterotetramer of two alpha and two beta subunits. Mg(2+) serves as cofactor.

It catalyses the reaction succinate + ATP + CoA = succinyl-CoA + ADP + phosphate. It carries out the reaction GTP + succinate + CoA = succinyl-CoA + GDP + phosphate. Its pathway is carbohydrate metabolism; tricarboxylic acid cycle; succinate from succinyl-CoA (ligase route): step 1/1. Functionally, succinyl-CoA synthetase functions in the citric acid cycle (TCA), coupling the hydrolysis of succinyl-CoA to the synthesis of either ATP or GTP and thus represents the only step of substrate-level phosphorylation in the TCA. The beta subunit provides nucleotide specificity of the enzyme and binds the substrate succinate, while the binding sites for coenzyme A and phosphate are found in the alpha subunit. This Aliivibrio fischeri (strain ATCC 700601 / ES114) (Vibrio fischeri) protein is Succinate--CoA ligase [ADP-forming] subunit beta.